Consider the following 281-residue polypeptide: MGRFEGKVAVVTGAGAGIGKACALAIAREGGRVVVADIDGSAAIACTAQIAAEAGHALALAIDIADAQAVAALFETAERHFGGVDLLVNNASAMHLTPRDRAILELELAVWDQTMATNLRGTLLCCRQAIPRMIARGGGAIVNMSSCQGLSGDTALTSYAASKAAMNMLSSSLATQYGHAQIRCNAVAPGLIMTERLLAKLDACMQTHLRRHQLLPRVGRPEDVAALVAFLLSDDAAFITGQVVCIDGGMLAHVPTYADGGNSRAARPAGETAEADAAPRC.

Residue 10–34 coordinates NAD(+); that stretch reads VVTGAGAGIGKACALAIAREGGRVV. Residue S146 participates in substrate binding. Y159 serves as the catalytic Proton acceptor. The tract at residues 261 to 281 is disordered; sequence GNSRAARPAGETAEADAAPRC.

Belongs to the short-chain dehydrogenases/reductases (SDR) family.

The sequence is that of Probable short-chain type dehydrogenase/reductase blr2146 from Bradyrhizobium diazoefficiens (strain JCM 10833 / BCRC 13528 / IAM 13628 / NBRC 14792 / USDA 110).